The primary structure comprises 346 residues: Low specificity L-threonine aldolase (346 aa).

An N6-(pyridoxal phosphate)lysine modification is found at K207.

The protein belongs to the threonine aldolase family. In terms of assembly, homotetramer. Requires pyridoxal 5'-phosphate as cofactor.

It catalyses the reaction L-threonine = acetaldehyde + glycine. The enzyme catalyses L-allo-threonine = acetaldehyde + glycine. In terms of biological role, catalyzes the cleavage of L-allo-threonine and L-threonine to glycine and acetaldehyde. Can also act on L-erythro-phenylserine, L-threo-phenylserine, L-beta-3,4-methylenedioxyphenylserine and L-beta-3,4-dihydroxyphenylserine. The protein is Low specificity L-threonine aldolase (ltaE) of Pseudomonas sp. (strain NCIMB 10558).